The primary structure comprises 517 residues: Ribose import ATP-binding protein RbsA 1 (517 aa).

ABC transporter domains lie at 11 to 251 and 263 to 507; these read LEMR…VGRD and YDPG…ALAT. 43 to 50 lines the ATP pocket; sequence GENGAGKS.

The protein belongs to the ABC transporter superfamily. Ribose importer (TC 3.A.1.2.1) family. The complex is composed of an ATP-binding protein (RbsA), two transmembrane proteins (RbsC) and a solute-binding protein (RbsB).

Its subcellular location is the cell inner membrane. The enzyme catalyses D-ribose(out) + ATP + H2O = D-ribose(in) + ADP + phosphate + H(+). Its function is as follows. Part of the ABC transporter complex RbsABC involved in ribose import. Responsible for energy coupling to the transport system. The sequence is that of Ribose import ATP-binding protein RbsA 1 from Burkholderia cenocepacia (strain HI2424).